A 112-amino-acid chain; its full sequence is MDWLKNTTIVVLFSHSTDKSNKHKKRQVQCNMRKNTLDMVTIGIACLVGVYTGTRFFEPIVIDRLRKDGNLRTDIPIPEYDEDGNLLKVTPSLSSTPAAPPTPPTPPTPPQQ.

The chain crosses the membrane as a helical span at residues 35-57 (NTLDMVTIGIACLVGVYTGTRFF). The segment at 82-112 (EDGNLLKVTPSLSSTPAAPPTPPTPPTPPQQ) is disordered. Residues 98-112 (AAPPTPPTPPTPPQQ) show a composition bias toward pro residues.

The protein localises to the mitochondrion membrane. May be involved in cell wall organization and biogenesis. This Saccharomyces cerevisiae (strain ATCC 204508 / S288c) (Baker's yeast) protein is Protein ECM19 (ECM19).